The chain runs to 217 residues: Cytidylate kinase (217 aa).

Residue 9–17 (GPSSSGKSS) participates in ATP binding.

This sequence belongs to the cytidylate kinase family. Type 1 subfamily.

The protein resides in the cytoplasm. It catalyses the reaction CMP + ATP = CDP + ADP. The catalysed reaction is dCMP + ATP = dCDP + ADP. The polypeptide is Cytidylate kinase (Mycoplasma pneumoniae (strain ATCC 29342 / M129 / Subtype 1) (Mycoplasmoides pneumoniae)).